A 302-amino-acid polypeptide reads, in one-letter code: Taste receptor type 2 member 104 (302 aa).

Residues 1–7 (MLSMLES) are Extracellular-facing. A helical membrane pass occupies residues 8–28 (ILLSVATSEAMLGILGNIFIV). Residues 29 to 43 (LVNCTNWVRNKKLSK) are Cytoplasmic-facing. The chain crosses the membrane as a helical span at residues 44–64 (INFILTGLAISRVFTIWIITL). The Extracellular portion of the chain corresponds to 65–87 (DAYTKVFFLTTLMPSNLHECISY). Residues 88-108 (IWVIINHLSVWFATSLSIFYF) form a helical membrane-spanning segment. At 109-128 (LKIANFSHYIFLWLKRRADK) the chain is on the cytoplasmic side. The chain crosses the membrane as a helical span at residues 129 to 149 (VFVFLIGYLIITWLASFPLAV). The Extracellular segment spans residues 150–182 (TVIKNIKVHHNNTSWLIQLEKRELLINYVFANM). N160 and N161 each carry an N-linked (GlcNAc...) asparagine glycan. Residues 183–203 (GPISLFMVAVFTCFLLTISLW) form a helical membrane-spanning segment. At 204–233 (RHRRRMQSTGSKFRDLNTEVHVKAMKVLIS) the chain is on the cytoplasmic side. A helical transmembrane segment spans residues 234 to 254 (FIILFILYFMGVLIETLCLFL). The Extracellular segment spans residues 255–257 (TEN). Residues 258–278 (ILLFIFGFTLSSTYPCCHSFI) form a helical membrane-spanning segment. Residues 279–302 (LILTSRELKQASMRALQRLKCCET) lie on the Cytoplasmic side of the membrane.

It belongs to the G-protein coupled receptor T2R family.

It localises to the membrane. Its function is as follows. Putative taste receptor which may play a role in the perception of bitterness. The polypeptide is Taste receptor type 2 member 104 (Rattus norvegicus (Rat)).